The primary structure comprises 273 residues: Eukaryotic translation initiation factor 3 subunit G-2 (273 aa).

An RRM domain is found at 193 to 271 (SAVRISNLSE…LILCVEWSKP (79 aa)).

Belongs to the eIF-3 subunit G family. In terms of assembly, component of the eukaryotic translation initiation factor 3 (eIF-3) complex. The eIF-3 complex interacts with pix.

The protein resides in the cytoplasm. RNA-binding component of the eukaryotic translation initiation factor 3 (eIF-3) complex, which is involved in protein synthesis of a specialized repertoire of mRNAs and, together with other initiation factors, stimulates binding of mRNA and methionyl-tRNAi to the 40S ribosome. The eIF-3 complex specifically targets and initiates translation of a subset of mRNAs involved in cell proliferation. This subunit can bind 18S rRNA. The polypeptide is Eukaryotic translation initiation factor 3 subunit G-2 (Drosophila simulans (Fruit fly)).